The sequence spans 514 residues: L-carnitine/gamma-butyrobetaine antiporter (514 aa).

At 1-11 the chain is on the cytoplasmic side; the sequence is MSKDNKKAGIE. Residues 12–30 form a helical membrane-spanning segment; the sequence is PKVFFPPLIIVGILCWLTV. The Periplasmic segment spans residues 31–42; sequence RDLDASNEVINA. Residues 43 to 68 traverse the membrane as a helical segment; sequence VFSYVTNVWGWAFEWYMVIMFGGWFW. Over 69-91 the chain is Cytoplasmic; it reads LVFGRYAKKRLGDEKPEFSTASW. Residues 92–112 form a helical membrane-spanning segment; it reads IFMMFASCTSAAVLFWGSIEI. At 113 to 131 the chain is on the periplasmic side; sequence YYYISSPPFGMEGYSAPAK. The chain crosses the membrane as a helical span at residues 132–154; sequence EIGLAYSLFHWGPLPWATYSFLS. Residues 155 to 185 are Cytoplasmic-facing; that stretch reads VAFAYFFFVRKMEVIRPSSTLTPLVGEKHVN. Residues 186-216 form a helical membrane-spanning segment; it reads GLFGTVVDNFYLVALILAMGTSLGLATPLVT. The Periplasmic portion of the chain corresponds to 217 to 230; it reads ECIQYLFGIPHTLQ. The helical transmembrane segment at 231-249 threads the bilayer; that stretch reads LDAIIISCWILLNAICVAF. Topologically, residues 250-251 are cytoplasmic; that stretch reads GL. The helical transmembrane segment at 252–277 threads the bilayer; the sequence is QKGVKIASDVRTYLSFLMLGWVFIVG. Topologically, residues 278–311 are periplasmic; that stretch reads GASFIVNYFTDSVGTLLMYMPRMLFYTDPIGKGG. The helical transmembrane segment at 312-335 threads the bilayer; that stretch reads FPQAWTVFYWAWWVIYAIQMSIFL. The Cytoplasmic segment spans residues 336–347; the sequence is ARISKGRTVREL. A helical membrane pass occupies residues 348 to 369; sequence CLGMVSGLTAGTWLIWTILGGN. The Periplasmic segment spans residues 370–404; that stretch reads TLQLIDQNILNIPQLIDQYGVPRAIIETWAALPLS. A helical transmembrane segment spans residues 405-434; that stretch reads TATMWGFFILCFIATVTLINACSYTLAMST. Topologically, residues 435–445 are cytoplasmic; sequence CRSMKEGAEPP. Residues 446-464 form a helical membrane-spanning segment; that stretch reads LLVRIGWSVLVGIIGIILL. The Periplasmic portion of the chain corresponds to 465-468; that stretch reads ALGG. Residues 469-492 traverse the membrane as a helical segment; the sequence is LKPIQTAIIAGGCPLFFVNIMVTL. At 493–514 the chain is on the cytoplasmic side; sequence SFIKDAKVHWKDCSPYTQKMTH.

Belongs to the BCCT transporter (TC 2.A.15) family. CaiT subfamily. As to quaternary structure, homotrimer.

It localises to the cell inner membrane. It carries out the reaction 4-(trimethylamino)butanoate(in) + (R)-carnitine(out) = 4-(trimethylamino)butanoate(out) + (R)-carnitine(in). The protein operates within amine and polyamine metabolism; carnitine metabolism. Its function is as follows. Catalyzes the exchange of L-carnitine for gamma-butyrobetaine. In Proteus mirabilis (strain HI4320), this protein is L-carnitine/gamma-butyrobetaine antiporter.